The following is a 328-amino-acid chain: Malate dehydrogenase (328 aa).

An NAD(+)-binding site is contributed by 12 to 18 (GAAGQIG). Arg-93 and Arg-99 together coordinate substrate. NAD(+) contacts are provided by residues Asn-106, Gln-113, and 130-132 (VGN). Positions 132 and 163 each coordinate substrate. The Proton acceptor role is filled by His-188.

It belongs to the LDH/MDH superfamily. MDH type 2 family.

The catalysed reaction is (S)-malate + NAD(+) = oxaloacetate + NADH + H(+). In terms of biological role, catalyzes the reversible oxidation of malate to oxaloacetate. This Saccharopolyspora erythraea (strain ATCC 11635 / DSM 40517 / JCM 4748 / NBRC 13426 / NCIMB 8594 / NRRL 2338) protein is Malate dehydrogenase.